Reading from the N-terminus, the 439-residue chain is RNA polymerase II-associated protein RBA50 (439 aa).

2 disordered regions span residues 1–35 (MDLL…GFPE) and 49–79 (LREK…SEAK). Positions 15–30 (SVESNDNGTLSTNNCG) are enriched in polar residues.

It belongs to the RPAP1 family.

The protein resides in the cytoplasm. In terms of biological role, forms an interface between the RNA polymerase II enzyme and chaperone/scaffolding proteins, suggesting that it is required to connect RNA polymerase II to regulators of protein complex formation. The polypeptide is RNA polymerase II-associated protein RBA50 (RBA50) (Saccharomyces cerevisiae (strain ATCC 204508 / S288c) (Baker's yeast)).